The primary structure comprises 620 residues: Chaperone protein HscA homolog (620 aa).

Belongs to the heat shock protein 70 family.

In terms of biological role, chaperone involved in the maturation of iron-sulfur cluster-containing proteins. Has a low intrinsic ATPase activity which is markedly stimulated by HscB. In Shewanella piezotolerans (strain WP3 / JCM 13877), this protein is Chaperone protein HscA homolog.